Here is a 94-residue protein sequence, read N- to C-terminus: Integration host factor subunit beta (94 aa).

This sequence belongs to the bacterial histone-like protein family. In terms of assembly, heterodimer of an alpha and a beta chain.

In terms of biological role, this protein is one of the two subunits of integration host factor, a specific DNA-binding protein that functions in genetic recombination as well as in transcriptional and translational control. The polypeptide is Integration host factor subunit beta (Escherichia coli (strain UTI89 / UPEC)).